A 335-amino-acid chain; its full sequence is Non-structural protein P9-1 (335 aa).

Over residues 27-42 (FNANTKNQNQNTSNTQ) the composition is skewed to low complexity. Residues 27 to 48 (FNANTKNQNQNTSNTQSSGGIT) are disordered.

This Fiji disease virus (isolate Sugarcane) (FDV) protein is Non-structural protein P9-1 (S9).